The sequence spans 242 residues: Type III pantothenate kinase (242 aa).

Residue 6–13 (DAGNTRLK) coordinates ATP. Substrate contacts are provided by residues Tyr-90 and 97-100 (GADR). The active-site Proton acceptor is the Asp-99. Asp-119 contacts K(+). Ser-122 lines the ATP pocket. Thr-174 provides a ligand contact to substrate.

The protein belongs to the type III pantothenate kinase family. Homodimer. Requires NH4(+) as cofactor. K(+) is required as a cofactor.

It is found in the cytoplasm. It catalyses the reaction (R)-pantothenate + ATP = (R)-4'-phosphopantothenate + ADP + H(+). It participates in cofactor biosynthesis; coenzyme A biosynthesis; CoA from (R)-pantothenate: step 1/5. In terms of biological role, catalyzes the phosphorylation of pantothenate (Pan), the first step in CoA biosynthesis. The chain is Type III pantothenate kinase from Marinobacter nauticus (strain ATCC 700491 / DSM 11845 / VT8) (Marinobacter aquaeolei).